The sequence spans 366 residues: Histidinol-phosphate aminotransferase 2 (366 aa).

Position 226 is an N6-(pyridoxal phosphate)lysine (K226).

It belongs to the class-II pyridoxal-phosphate-dependent aminotransferase family. Histidinol-phosphate aminotransferase subfamily. Homodimer. Requires pyridoxal 5'-phosphate as cofactor.

The catalysed reaction is L-histidinol phosphate + 2-oxoglutarate = 3-(imidazol-4-yl)-2-oxopropyl phosphate + L-glutamate. Its pathway is amino-acid biosynthesis; L-histidine biosynthesis; L-histidine from 5-phospho-alpha-D-ribose 1-diphosphate: step 7/9. The chain is Histidinol-phosphate aminotransferase 2 from Haemophilus influenzae (strain 86-028NP).